Here is a 306-residue protein sequence, read N- to C-terminus: Phospho-N-acetylmuramoyl-pentapeptide-transferase (306 aa).

10 helical membrane passes run 2 to 22 (IALL…LKYW), 47 to 67 (SGTP…FLFF), 71 to 91 (FFIS…DLKL), 105 to 125 (IFLS…DYKI), 131 to 151 (LIID…IAVP), 162 to 182 (GLAG…SFHF), 185 to 205 (IALE…FNSH), 209 to 229 (IFMG…LSVV), 236 to 256 (LIFL…QVFF), and 284 to 304 (IVWR…VLWY).

Belongs to the glycosyltransferase 4 family. MraY subfamily. Requires Mg(2+) as cofactor.

It localises to the cell inner membrane. The catalysed reaction is UDP-N-acetyl-alpha-D-muramoyl-L-alanyl-gamma-D-glutamyl-meso-2,6-diaminopimeloyl-D-alanyl-D-alanine + di-trans,octa-cis-undecaprenyl phosphate = di-trans,octa-cis-undecaprenyl diphospho-N-acetyl-alpha-D-muramoyl-L-alanyl-D-glutamyl-meso-2,6-diaminopimeloyl-D-alanyl-D-alanine + UMP. It participates in cell wall biogenesis; peptidoglycan biosynthesis. Catalyzes the initial step of the lipid cycle reactions in the biosynthesis of the cell wall peptidoglycan: transfers peptidoglycan precursor phospho-MurNAc-pentapeptide from UDP-MurNAc-pentapeptide onto the lipid carrier undecaprenyl phosphate, yielding undecaprenyl-pyrophosphoryl-MurNAc-pentapeptide, known as lipid I. This is Phospho-N-acetylmuramoyl-pentapeptide-transferase from Dictyoglomus thermophilum (strain ATCC 35947 / DSM 3960 / H-6-12).